The sequence spans 192 residues: Adenylate kinase (192 aa).

An ATP-binding site is contributed by 10-15 (GAGKGT). The segment at 30-59 (STGDMLRTAVAQATEVGKRAKAVMDAGQLV) is NMP. AMP contacts are provided by residues threonine 31, arginine 36, 57–59 (QLV), 85–88 (GYPR), and glutamine 92. The LID stretch occupies residues 126 to 142 (NRVTETVAAGGTVRSDD). Arginine 127 lines the ATP pocket. Positions 139 and 150 each coordinate AMP. Alanine 178 serves as a coordination point for ATP.

This sequence belongs to the adenylate kinase family. As to quaternary structure, monomer.

The protein localises to the cytoplasm. The catalysed reaction is AMP + ATP = 2 ADP. It functions in the pathway purine metabolism; AMP biosynthesis via salvage pathway; AMP from ADP: step 1/1. Functionally, catalyzes the reversible transfer of the terminal phosphate group between ATP and AMP. Plays an important role in cellular energy homeostasis and in adenine nucleotide metabolism. This chain is Adenylate kinase, found in Rhizobium meliloti (strain 1021) (Ensifer meliloti).